Consider the following 207-residue polypeptide: Large ribosomal subunit protein uL4 (207 aa).

The interval 50 to 75 (KTKTVSEVSGTTKKPFKQKGTGNARQ) is disordered.

This sequence belongs to the universal ribosomal protein uL4 family. As to quaternary structure, part of the 50S ribosomal subunit.

Its function is as follows. One of the primary rRNA binding proteins, this protein initially binds near the 5'-end of the 23S rRNA. It is important during the early stages of 50S assembly. It makes multiple contacts with different domains of the 23S rRNA in the assembled 50S subunit and ribosome. In terms of biological role, forms part of the polypeptide exit tunnel. This Rickettsia felis (strain ATCC VR-1525 / URRWXCal2) (Rickettsia azadi) protein is Large ribosomal subunit protein uL4.